The sequence spans 299 residues: Biotin transporter (299 aa).

10 helical membrane passes run 2-22 (ALLI…GEYL), 26-46 (VDSY…FLPF), 56-76 (TISL…MLSF), 81-101 (YLTV…ITLI), 110-130 (LRWG…IIRY), 137-157 (FWVG…GMVG), 172-192 (AFAW…SLLG), 202-222 (LQWS…YFMW), 233-253 (TLGI…LAIW), and 256-276 (QPHW…LWVH). EamA domains follow at residues 3–128 (LLII…AGII) and 139–274 (VGLL…ASLW).

This sequence belongs to the drug/metabolite transporter (DMT) superfamily. 10 TMS drug/metabolite exporter (DME) (TC 2.A.7.3) family.

It localises to the cell inner membrane. The catalysed reaction is biotin(in) = biotin(out). Functionally, uptake of biotin. The protein is Biotin transporter of Salmonella typhi.